The primary structure comprises 438 residues: 23S rRNA (uracil(1939)-C(5))-methyltransferase RlmD (438 aa).

The TRAM domain maps to 11-69 (LQPESKHQQVLVEKLDHQGAGIAYLNKKPLFIDGTLPGEEVVTQLTESKSKFARGKLIK). The [4Fe-4S] cluster site is built by Cys-82, Cys-88, Cys-91, and Cys-169. Gln-272, Phe-301, Asn-306, Glu-322, Asn-349, and Asp-370 together coordinate S-adenosyl-L-methionine. Cys-396 serves as the catalytic Nucleophile.

It belongs to the class I-like SAM-binding methyltransferase superfamily. RNA M5U methyltransferase family. RlmD subfamily.

It catalyses the reaction uridine(1939) in 23S rRNA + S-adenosyl-L-methionine = 5-methyluridine(1939) in 23S rRNA + S-adenosyl-L-homocysteine + H(+). Catalyzes the formation of 5-methyl-uridine at position 1939 (m5U1939) in 23S rRNA. This Vibrio vulnificus (strain YJ016) protein is 23S rRNA (uracil(1939)-C(5))-methyltransferase RlmD.